Reading from the N-terminus, the 216-residue chain is Uracil phosphoribosyltransferase (216 aa).

30–34 serves as a coordination point for GTP; it reads KTLVR. Residues R80, R105, and 140 to 148 each bind 5-phospho-alpha-D-ribose 1-diphosphate; that span reads DPMIATAST. Uracil contacts are provided by residues I203 and 208-210; that span reads GDA. Residue D209 coordinates 5-phospho-alpha-D-ribose 1-diphosphate.

It belongs to the UPRTase family. Mg(2+) is required as a cofactor.

The enzyme catalyses UMP + diphosphate = 5-phospho-alpha-D-ribose 1-diphosphate + uracil. Its pathway is pyrimidine metabolism; UMP biosynthesis via salvage pathway; UMP from uracil: step 1/1. Allosterically activated by GTP. In terms of biological role, catalyzes the conversion of uracil and 5-phospho-alpha-D-ribose 1-diphosphate (PRPP) to UMP and diphosphate. In Sulfurisphaera tokodaii (strain DSM 16993 / JCM 10545 / NBRC 100140 / 7) (Sulfolobus tokodaii), this protein is Uracil phosphoribosyltransferase.